The following is an 81-amino-acid chain: Photosystem I iron-sulfur center (81 aa).

4Fe-4S ferredoxin-type domains are found at residues 2 to 31 (SHSVKIYDTCIGCTQCVRACPTDVLEMIPW) and 39 to 68 (IASAPRTEDCVGCKRCESACPTDFLSVRVY). [4Fe-4S] cluster-binding residues include Cys11, Cys14, Cys17, Cys21, Cys48, Cys51, Cys54, and Cys58.

The eukaryotic PSI reaction center is composed of at least 11 subunits. [4Fe-4S] cluster serves as cofactor.

It is found in the plastid thylakoid membrane. The catalysed reaction is reduced [plastocyanin] + hnu + oxidized [2Fe-2S]-[ferredoxin] = oxidized [plastocyanin] + reduced [2Fe-2S]-[ferredoxin]. In terms of biological role, apoprotein for the two 4Fe-4S centers FA and FB of photosystem I (PSI); essential for photochemical activity. FB is the terminal electron acceptor of PSI, donating electrons to ferredoxin. The C-terminus interacts with PsaA/B/D and helps assemble the protein into the PSI complex. Required for binding of PsaD and PsaE to PSI. PSI is a plastocyanin-ferredoxin oxidoreductase, converting photonic excitation into a charge separation, which transfers an electron from the donor P700 chlorophyll pair to the spectroscopically characterized acceptors A0, A1, FX, FA and FB in turn. This is Photosystem I iron-sulfur center from Cuscuta gronovii (Common dodder).